Reading from the N-terminus, the 184-residue chain is Lactoylglutathione lyase (184 aa).

An N-acetylalanine modification is found at Ala-2. A disulfide bridge connects residues Cys-19 and Cys-20. Positions 31-177 (LLQQTMLRIK…DGYWIEILNP (147 aa)) constitute a VOC domain. 2 residues coordinate substrate: Gln-34 and Arg-38. A Zn(2+)-binding site is contributed by Gln-34. At Lys-88 the chain carries N6-succinyllysine. Residue Glu-100 participates in Zn(2+) binding. Asn-104 lines the substrate pocket. Position 107 is a phosphothreonine (Thr-107). Substrate-binding residues include Arg-123 and His-127. His-127 is a Zn(2+) binding site. Residue Cys-139 is modified to S-glutathionyl cysteine. Lys-148 carries the N6-acetyllysine; alternate modification. Lys-148 carries the N6-succinyllysine; alternate modification. 157–158 (KM) serves as a coordination point for substrate. Glu-173 serves as a coordination point for Zn(2+). The active-site Proton donor/acceptor is Glu-173.

Belongs to the glyoxalase I family. As to quaternary structure, homodimer. Requires Zn(2+) as cofactor. Post-translationally, glutathionylation at Cys-139 inhibits enzyme activity. In terms of processing, phosphorylated at Thr-107 in the presence of CaMK2. However, this is a consensus site for phosphorylation by CK2 so phosphorylation may be mediated by CK2 rather than CaMK2. Phosphorylation is induced by TNF and suppresses the TNF-induced transcriptional activity of NF-kappa-B. Exists in a nitric oxide (NO)-modified form. The exact nature of the modification is unknown, but it suppresses the TNF-induced transcriptional activity of NF-kappa-B.

It catalyses the reaction (R)-S-lactoylglutathione = methylglyoxal + glutathione. It functions in the pathway secondary metabolite metabolism; methylglyoxal degradation; (R)-lactate from methylglyoxal: step 1/2. Subject to competitive inhibition by methyl-gerfelin. Its function is as follows. Catalyzes the conversion of hemimercaptal, formed from methylglyoxal and glutathione, to S-lactoylglutathione. Involved in the regulation of TNF-induced transcriptional activity of NF-kappa-B. Required for normal osteoclastogenesis. This chain is Lactoylglutathione lyase (Glo1), found in Mus musculus (Mouse).